We begin with the raw amino-acid sequence, 581 residues long: Pectinesterase 3 (581 aa).

Positions 1–55 (MDTIKSFKGYGKVNELEQQAYEKKTRKRLIIIAVSSIVLIAVIIAAVAGVVIHNR) are cleaved as a signal peptide. Asn-101, Asn-156, Asn-200, Asn-217, and Asn-268 each carry an N-linked (GlcNAc...) asparagine glycan. Positions 348 and 378 each coordinate substrate. Asp-401 functions as the Proton donor in the catalytic mechanism. A disulfide bond links Cys-415 and Cys-435. Asp-422 acts as the Nucleophile in catalysis. Asn-477 carries an N-linked (GlcNAc...) asparagine glycan. Positions 486 and 488 each coordinate substrate.

This sequence in the N-terminal section; belongs to the PMEI family. The protein in the C-terminal section; belongs to the pectinesterase family.

The protein resides in the secreted. Its subcellular location is the cell wall. The enzyme catalyses [(1-&gt;4)-alpha-D-galacturonosyl methyl ester](n) + n H2O = [(1-&gt;4)-alpha-D-galacturonosyl](n) + n methanol + n H(+). Its pathway is glycan metabolism; pectin degradation; 2-dehydro-3-deoxy-D-gluconate from pectin: step 1/5. Its function is as follows. May have roles in the deposition of pectin in developing tissues and in the wall loosening and cell separation that occurs in cell expansion, fruit ripening and abscission. This chain is Pectinesterase 3 (MPE3), found in Phaseolus vulgaris (Kidney bean).